The following is a 246-amino-acid chain: Heavy metal-associated isoprenylated plant protein 8 (246 aa).

The tract at residues 1 to 31 (MGKNKQNGESDNKSEKKNQKNGDSSVDKSDK) is disordered. The region spanning 35-99 (CKEIVLKVYM…RVQKKFSRNA (65 aa)) is the HMA 1 domain. The a metal cation site is built by C46 and C49. The segment at 96–122 (SRNAEMISPKHNPKQDQKEPQQKKESA) is disordered. Residues 108–122 (PKQDQKEPQQKKESA) are compositionally biased toward basic and acidic residues. An HMA 2 domain is found at 125-189 (IKTAILRMNM…IKKKLGKHAE (65 aa)). 2 residues coordinate a metal cation: C136 and C139. The disordered stretch occupies residues 191-226 (LSQITEKGKDNNKKNNNKKEESDGNKIFSYPPQYSS). Basic and acidic residues predominate over residues 196-214 (EKGKDNNKKNNNKKEESDG). C243 carries the post-translational modification Cysteine methyl ester. Residue C243 is the site of S-farnesyl cysteine attachment. The propeptide at 244-246 (SIM) is removed in mature form.

This sequence belongs to the HIPP family.

Its function is as follows. Heavy-metal-binding protein. The sequence is that of Heavy metal-associated isoprenylated plant protein 8 from Arabidopsis thaliana (Mouse-ear cress).